The primary structure comprises 338 residues: Phenylalanine--tRNA ligase alpha subunit (338 aa).

Glutamate 253 is a Mg(2+) binding site.

Belongs to the class-II aminoacyl-tRNA synthetase family. Phe-tRNA synthetase alpha subunit type 1 subfamily. Tetramer of two alpha and two beta subunits. Requires Mg(2+) as cofactor.

The protein localises to the cytoplasm. It catalyses the reaction tRNA(Phe) + L-phenylalanine + ATP = L-phenylalanyl-tRNA(Phe) + AMP + diphosphate + H(+). The polypeptide is Phenylalanine--tRNA ligase alpha subunit (Gloeobacter violaceus (strain ATCC 29082 / PCC 7421)).